A 238-amino-acid polypeptide reads, in one-letter code: Sugar fermentation stimulation protein homolog (238 aa).

It belongs to the SfsA family.

This chain is Sugar fermentation stimulation protein homolog, found in Vibrio parahaemolyticus serotype O3:K6 (strain RIMD 2210633).